Consider the following 188-residue polypeptide: Mediator of RNA polymerase II transcription subunit 29 (188 aa).

2 stretches are compositionally biased toward low complexity: residues 1-23 (MNPNMNMMPMSGPQMMQVMQSSP) and 30-43 (VQHQQQQPPQPLQQ). A disordered region spans residues 1–43 (MNPNMNMMPMSGPQMMQVMQSSPSGPPGPVQHQQQQPPQPLQQ).

The protein belongs to the Mediator complex subunit 29 family. Component of the Mediator complex. Self-associates. Interacts with dsx.

It is found in the nucleus. In terms of biological role, component of the Mediator complex, a coactivator involved in the regulated transcription of nearly all RNA polymerase II-dependent genes. Mediator functions as a bridge to convey information from gene-specific regulatory proteins to the basal RNA polymerase II transcription machinery. Mediator is recruited to promoters by direct interactions with regulatory proteins and serves as a scaffold for the assembly of a functional preinitiation complex with RNA polymerase II and the general transcription factors. Required for female somatic sexual development. The polypeptide is Mediator of RNA polymerase II transcription subunit 29 (ix) (Drosophila melanogaster (Fruit fly)).